The following is a 1320-amino-acid chain: Mediator of RNA polymerase II transcription subunit 15 (1320 aa).

Residues 235–244 show a composition bias toward polar residues; that stretch reads QQASLNQLTP. 5 disordered regions span residues 235 to 283, 372 to 398, 540 to 688, 702 to 791, and 1233 to 1270; these read QQAS…KPQQ, KNMMAQQSAAALQQGQQQPRQMGPQQA, QLQQ…QQQT, QTQQ…PTEQ, and DSSSAEPPTEQVNKKRSHDSLEISPAESDSSLLNDSKK. Composition is skewed to low complexity over residues 245–283, 375–398, and 540–554; these read QQRAQLQQRQQSTQQSQSAPPQAPQVAQSQQVPAQKPQQ, MAQQSAAALQQGQQQPRQMGPQQA, and QLQQTQEQDPQHTQL. Residues 555-587 are compositionally biased toward polar residues; the sequence is ADSFSQRQFTSPTLAKPSANVSTIAQQQTQPTA. 3 stretches are compositionally biased toward low complexity: residues 588 to 624, 634 to 688, and 702 to 780; these read LSQSHPQQQQGSQAQQQLLQQQQGSQAQQQLLQQQQQ, QQQT…QQQT, and QTQQ…PQQT.

It belongs to the Mediator complex subunit 15 family. In terms of assembly, component of the Mediator complex.

The protein resides in the nucleus. Component of the Mediator complex, a coactivator involved in regulated gene transcription of nearly all RNA polymerase II-dependent genes. Mediator functions as a bridge to convey information from gene-specific regulatory proteins to the basal RNA polymerase II transcription machinery. Mediator is recruited to promoters by direct interactions with regulatory proteins and serves as a scaffold for the assembly of a functional preinitiation complex with RNA polymerase II and the general transcription factors. This is Mediator of RNA polymerase II transcription subunit 15 (GAL11) from Eremothecium gossypii (strain ATCC 10895 / CBS 109.51 / FGSC 9923 / NRRL Y-1056) (Yeast).